Reading from the N-terminus, the 750-residue chain is Methylmalonyl-CoA mutase, mitochondrial (750 aa).

The transit peptide at 1–32 (MLRAKNQLFLLSPHYLRQVKESSGSRLIQQRL) directs the protein to the mitochondrion. Gln50 contacts malonyl-CoA. Lys89 carries the post-translational modification N6-acetyllysine. Residues 96–99 (YPTM) and 106–110 (TIRQY) each bind malonyl-CoA. The residue at position 212 (Lys212) is an N6-acetyllysine. Malonyl-CoA-binding positions include 216-218 (TIQ), Arg228, Lys255, His265, and 304-306 (RLS). N6-acetyllysine is present on Lys335. Residue Lys343 is modified to N6-succinyllysine. Ser481 carries the phosphoserine modification. An N6-succinyllysine modification is found at Lys595. Position 602 is an N6-acetyllysine (Lys602). Residues 614–746 (RPRLLVAKMG…DDIEKCLEKK (133 aa)) enclose the B12-binding domain. An adenosylcob(III)alamin-binding site is contributed by His627.

It belongs to the methylmalonyl-CoA mutase family. Homodimer. Interacts (the apoenzyme form) with MMAA; the interaction is GTP dependent. Adenosylcob(III)alamin serves as cofactor.

Its subcellular location is the mitochondrion matrix. It is found in the mitochondrion. It localises to the cytoplasm. The enzyme catalyses (R)-methylmalonyl-CoA = succinyl-CoA. With respect to regulation, during catalysis, accumulation of oxidized inactive cofactor hydroxocobalamin (OH2Cbl) leads to loss of MMUT activity. Interaction with MMAA decreases the rate of OH2Cbl formation and promotes the replacement of OH2Cbl by the active cofactor adenosylcobalamin (AdoCbl), thereby restoring MMUT activity. Inhibited by itaconyl-CoA, a metabolite that inactivates the coenzyme B12 cofactor. Inhibited at high concentration of substrate. Its function is as follows. Catalyzes the reversible isomerization of methylmalonyl-CoA (MMCoA) (generated from branched-chain amino acid metabolism and degradation of dietary odd chain fatty acids and cholesterol) to succinyl-CoA (3-carboxypropionyl-CoA), a key intermediate of the tricarboxylic acid cycle. This chain is Methylmalonyl-CoA mutase, mitochondrial, found in Homo sapiens (Human).